Consider the following 512-residue polypeptide: tRNA-2-methylthio-N(6)-dimethylallyladenosine synthase (512 aa).

The tract at residues 1–22 (MVAHDAAAGVTGEGAGPPVRRA) is disordered. The 117-residue stretch at 25 to 141 (RTYQVRTYGC…LPTLLERARH (117 aa)) folds into the MTTase N-terminal domain. [4Fe-4S] cluster is bound by residues C34, C70, C104, C178, C182, and C185. One can recognise a Radical SAM core domain in the interval 164–400 (RESAYAAWVS…IALQEQISLE (237 aa)). In terms of domain architecture, TRAM spans 403–471 (RALVGQAVEV…PHHLIADAGV (69 aa)).

It belongs to the methylthiotransferase family. MiaB subfamily. Monomer. It depends on [4Fe-4S] cluster as a cofactor.

The protein resides in the cytoplasm. It carries out the reaction N(6)-dimethylallyladenosine(37) in tRNA + (sulfur carrier)-SH + AH2 + 2 S-adenosyl-L-methionine = 2-methylsulfanyl-N(6)-dimethylallyladenosine(37) in tRNA + (sulfur carrier)-H + 5'-deoxyadenosine + L-methionine + A + S-adenosyl-L-homocysteine + 2 H(+). Catalyzes the methylthiolation of N6-(dimethylallyl)adenosine (i(6)A), leading to the formation of 2-methylthio-N6-(dimethylallyl)adenosine (ms(2)i(6)A) at position 37 in tRNAs that read codons beginning with uridine. This is tRNA-2-methylthio-N(6)-dimethylallyladenosine synthase from Mycobacterium bovis (strain ATCC BAA-935 / AF2122/97).